Reading from the N-terminus, the 450-residue chain is Glucose-6-phosphate isomerase (450 aa).

The residue at position 38 (Thr38) is a Phosphothreonine. Catalysis depends on Glu290, which acts as the Proton donor. Catalysis depends on residues His311 and Lys425.

Belongs to the GPI family.

The protein resides in the cytoplasm. The catalysed reaction is alpha-D-glucose 6-phosphate = beta-D-fructose 6-phosphate. Its pathway is carbohydrate biosynthesis; gluconeogenesis. It participates in carbohydrate degradation; glycolysis; D-glyceraldehyde 3-phosphate and glycerone phosphate from D-glucose: step 2/4. In terms of biological role, catalyzes the reversible isomerization of glucose-6-phosphate to fructose-6-phosphate. The polypeptide is Glucose-6-phosphate isomerase (Bacillus licheniformis (strain ATCC 14580 / DSM 13 / JCM 2505 / CCUG 7422 / NBRC 12200 / NCIMB 9375 / NCTC 10341 / NRRL NRS-1264 / Gibson 46)).